The chain runs to 337 residues: DNA-directed RNA polymerase subunit alpha (337 aa).

The segment at 1 to 233 (MVREEVTIST…NLFIPFLHAE (233 aa)) is alpha N-terminal domain (alpha-NTD). The interval 266–337 (GIALKCIFID…FAMNLPKDFF (72 aa)) is alpha C-terminal domain (alpha-CTD).

This sequence belongs to the RNA polymerase alpha chain family. In terms of assembly, in plastids the minimal PEP RNA polymerase catalytic core is composed of four subunits: alpha, beta, beta', and beta''. When a (nuclear-encoded) sigma factor is associated with the core the holoenzyme is formed, which can initiate transcription.

It localises to the plastid. The protein localises to the chloroplast. The enzyme catalyses RNA(n) + a ribonucleoside 5'-triphosphate = RNA(n+1) + diphosphate. Functionally, DNA-dependent RNA polymerase catalyzes the transcription of DNA into RNA using the four ribonucleoside triphosphates as substrates. This is DNA-directed RNA polymerase subunit alpha from Ceratophyllum demersum (Rigid hornwort).